A 186-amino-acid polypeptide reads, in one-letter code: Lipid A palmitoyltransferase PagP (186 aa).

An N-terminal signal peptide occupies residues 1–25 (MNVSKYVAIFSFVFIQLISVGKVFA). Residues H58, D101, and S102 contribute to the active site.

It belongs to the lipid A palmitoyltransferase family. Homodimer.

It is found in the cell outer membrane. The catalysed reaction is lipid A (E. coli) + a 1-hexadecanoyl-2-acyl-sn-glycero-3-phosphocholine = hepta-acyl lipid A (E. coli) + a 2-acyl-sn-glycero-3-phosphocholine. It catalyses the reaction lipid IIA + a 1-hexadecanoyl-2-acyl-sn-glycero-3-phosphocholine = lipid IIB + a 2-acyl-sn-glycero-3-phosphocholine. It carries out the reaction lipid IVA (E. coli) + a 1-hexadecanoyl-2-acyl-sn-glycero-3-phosphocholine = lipid IVB (E. coli) + a 2-acyl-sn-glycero-3-phosphocholine. In terms of biological role, transfers a palmitate residue from the sn-1 position of a phospholipid to the N-linked hydroxymyristate on the proximal unit of lipid A or its precursors. The protein is Lipid A palmitoyltransferase PagP of Escherichia coli O157:H7.